We begin with the raw amino-acid sequence, 148 residues long: Deoxyuridine 5'-triphosphate nucleotidohydrolase (148 aa).

Substrate-binding positions include 67–69, N80, 84–86, and M94; these read RSG and LID.

Belongs to the dUTPase family. The cofactor is Mg(2+).

The catalysed reaction is dUTP + H2O = dUMP + diphosphate + H(+). The protein operates within pyrimidine metabolism; dUMP biosynthesis; dUMP from dCTP (dUTP route): step 2/2. Functionally, this enzyme is involved in nucleotide metabolism: it produces dUMP, the immediate precursor of thymidine nucleotides and it decreases the intracellular concentration of dUTP so that uracil cannot be incorporated into DNA. The chain is Deoxyuridine 5'-triphosphate nucleotidohydrolase from Burkholderia cenocepacia (strain HI2424).